The chain runs to 601 residues: tRNA 5-methylaminomethyl-2-thiouridine biosynthesis bifunctional protein MnmC (601 aa).

The segment at 1–237 (MSDPTASPLI…KKQRLEAVAP (237 aa)) is tRNA (mnm(5)s(2)U34)-methyltransferase. An FAD-dependent cmnm(5)s(2)U34 oxidoreductase region spans residues 252–601 (IGGGIAGAAM…FSSRVATGAV (350 aa)).

This sequence in the N-terminal section; belongs to the methyltransferase superfamily. tRNA (mnm(5)s(2)U34)-methyltransferase family. It in the C-terminal section; belongs to the DAO family. FAD serves as cofactor.

Its subcellular location is the cytoplasm. It carries out the reaction 5-aminomethyl-2-thiouridine(34) in tRNA + S-adenosyl-L-methionine = 5-methylaminomethyl-2-thiouridine(34) in tRNA + S-adenosyl-L-homocysteine + H(+). Catalyzes the last two steps in the biosynthesis of 5-methylaminomethyl-2-thiouridine (mnm(5)s(2)U) at the wobble position (U34) in tRNA. Catalyzes the FAD-dependent demodification of cmnm(5)s(2)U34 to nm(5)s(2)U34, followed by the transfer of a methyl group from S-adenosyl-L-methionine to nm(5)s(2)U34, to form mnm(5)s(2)U34. In Caulobacter sp. (strain K31), this protein is tRNA 5-methylaminomethyl-2-thiouridine biosynthesis bifunctional protein MnmC.